A 359-amino-acid polypeptide reads, in one-letter code: 3-dehydroquinate synthase (359 aa).

NAD(+) is bound by residues 71–76 (DGEQYK), 105–109 (GVIGD), 129–130 (TT), Lys-142, Lys-151, and 169–172 (CLKT). Positions 184, 247, and 264 each coordinate Zn(2+).

The protein belongs to the sugar phosphate cyclases superfamily. Dehydroquinate synthase family. Co(2+) is required as a cofactor. Zn(2+) serves as cofactor. Requires NAD(+) as cofactor.

It is found in the cytoplasm. The enzyme catalyses 7-phospho-2-dehydro-3-deoxy-D-arabino-heptonate = 3-dehydroquinate + phosphate. It participates in metabolic intermediate biosynthesis; chorismate biosynthesis; chorismate from D-erythrose 4-phosphate and phosphoenolpyruvate: step 2/7. Catalyzes the conversion of 3-deoxy-D-arabino-heptulosonate 7-phosphate (DAHP) to dehydroquinate (DHQ). This Shewanella amazonensis (strain ATCC BAA-1098 / SB2B) protein is 3-dehydroquinate synthase.